Reading from the N-terminus, the 1407-residue chain is DNA-directed RNA polymerase subunit beta' (1407 aa).

C70, C72, C85, and C88 together coordinate Zn(2+). D460, D462, and D464 together coordinate Mg(2+). 4 residues coordinate Zn(2+): C814, C888, C895, and C898. Residue K972 is modified to N6-acetyllysine.

Belongs to the RNA polymerase beta' chain family. The RNAP catalytic core consists of 2 alpha, 1 beta, 1 beta' and 1 omega subunit. When a sigma factor is associated with the core the holoenzyme is formed, which can initiate transcription. Mg(2+) is required as a cofactor. The cofactor is Zn(2+).

The enzyme catalyses RNA(n) + a ribonucleoside 5'-triphosphate = RNA(n+1) + diphosphate. In terms of biological role, DNA-dependent RNA polymerase catalyzes the transcription of DNA into RNA using the four ribonucleoside triphosphates as substrates. The protein is DNA-directed RNA polymerase subunit beta' of Shigella boydii serotype 18 (strain CDC 3083-94 / BS512).